Reading from the N-terminus, the 148-residue chain is L-alanine exporter AlaE (148 aa).

4 helical membrane-spanning segments follow: residues 18-38 (FALV…ISGM), 49-69 (VSIP…DAFI), 88-108 (LLAY…SVGA), and 115-135 (TAVA…GYFL).

Belongs to the AlaE exporter family.

It localises to the cell inner membrane. Exports L-alanine. This is L-alanine exporter AlaE from Yersinia enterocolitica subsp. palearctica serotype O:3 (strain DSM 13030 / CIP 106945 / Y11).